The primary structure comprises 403 residues: S-adenosylmethionine synthase (403 aa).

Residue His15 coordinates ATP. Asp17 contributes to the Mg(2+) binding site. Glu43 serves as a coordination point for K(+). L-methionine contacts are provided by Glu56 and Gln99. Positions 99-109 (QSPHIAQGVDR) are flexible loop. Residues 166–168 (DAK), 232–233 (KF), Asp241, 247–248 (RK), Ala264, and Lys268 each bind ATP. L-methionine is bound at residue Asp241. L-methionine is bound at residue Lys272.

This sequence belongs to the AdoMet synthase family. As to quaternary structure, homotetramer; dimer of dimers. It depends on Mg(2+) as a cofactor. The cofactor is K(+).

It localises to the cytoplasm. It carries out the reaction L-methionine + ATP + H2O = S-adenosyl-L-methionine + phosphate + diphosphate. Its pathway is amino-acid biosynthesis; S-adenosyl-L-methionine biosynthesis; S-adenosyl-L-methionine from L-methionine: step 1/1. In terms of biological role, catalyzes the formation of S-adenosylmethionine (AdoMet) from methionine and ATP. The overall synthetic reaction is composed of two sequential steps, AdoMet formation and the subsequent tripolyphosphate hydrolysis which occurs prior to release of AdoMet from the enzyme. The protein is S-adenosylmethionine synthase of Stenotrophomonas maltophilia (strain R551-3).